Here is a 624-residue protein sequence, read N- to C-terminus: Diatom spindle kinesin-1 (624 aa).

The interval 1–59 (MNAANRRKSTSTVGITGRKDATRMKIEQMEKERKERRKTMMQRKEARKQEHMKNIEAGN) is disordered. Residues 1–85 (MNAANRRKST…QENKIGDKSP (85 aa)) form a globular region. Basic and acidic residues-rich tracts occupy residues 17–33 (GRKD…EKER) and 42–54 (QRKE…HMKN). Positions 95–411 (NICIAVRKRP…LRYADRIKEQ (317 aa)) constitute a Kinesin motor domain. 186–193 (GQTGSGKT) serves as a coordination point for ATP. Residues 426–624 (SNREIMPSKE…LARQVQLTQY (199 aa)) are a coiled coil. Residues 478–511 (VDEEEADDEEGDYEEESEDLDYEDSEGQDYEEAV) are compositionally biased toward acidic residues. Positions 478–528 (VDEEEADDEEGDYEEESEDLDYEDSEGQDYEEAVESQYDHSQEAQEGEEEL) are disordered.

The protein belongs to the TRAFAC class myosin-kinesin ATPase superfamily. Kinesin family. MCAK/KIF2 subfamily.

Its subcellular location is the cytoplasm. The protein localises to the cytoskeleton. Functionally, involved in anaphase spindle elongation. The sequence is that of Diatom spindle kinesin-1 (DSK1) from Cylindrotheca fusiformis (Marine diatom).